Here is a 447-residue protein sequence, read N- to C-terminus: Phosphoglucosamine mutase (447 aa).

Catalysis depends on S102, which acts as the Phosphoserine intermediate. Mg(2+)-binding residues include S102, D241, D243, and D245. S102 bears the Phosphoserine mark.

It belongs to the phosphohexose mutase family. Requires Mg(2+) as cofactor. Activated by phosphorylation.

It carries out the reaction alpha-D-glucosamine 1-phosphate = D-glucosamine 6-phosphate. Functionally, catalyzes the conversion of glucosamine-6-phosphate to glucosamine-1-phosphate. The sequence is that of Phosphoglucosamine mutase from Pseudoalteromonas atlantica (strain T6c / ATCC BAA-1087).